Here is a 344-residue protein sequence, read N- to C-terminus: Protein BIM1 (344 aa).

Residue S2 is modified to N-acetylserine. The region spanning 6–107 is the Calponin-homology (CH) domain; that stretch reads GESRTELLTW…FLQWLKKHWI (102 aa). Positions 126–173 are disordered; it reads IITNNSATKPRTVSNPTTAKRSSSTGTGSAMSGGLATRHSSLGINGSR. Residues 127-146 show a composition bias toward polar residues; sequence ITNNSATKPRTVSNPTTAKR. Residues 147-159 show a composition bias toward low complexity; sequence SSSTGTGSAMSGG. The residue at position 157 (S157) is a Phosphoserine. Residues 163 to 173 show a composition bias toward polar residues; sequence RHSSLGINGSR. Residues 188–281 form the EB1 C-terminal domain; the sequence is ELTKSQETIG…LYATAEGFEM (94 aa). Residues 292–312 are disordered; that stretch reads NLGEHGTVPNQGGYANSNGEV.

Belongs to the MAPRE family.

Its subcellular location is the cytoplasm. It localises to the cytoskeleton. Its function is as follows. Binds microtubules. The polypeptide is Protein BIM1 (BIM1) (Saccharomyces cerevisiae (strain ATCC 204508 / S288c) (Baker's yeast)).